We begin with the raw amino-acid sequence, 218 residues long: MGQKIHPLGFRLGVTQEHLSNWFARPSRYSDLLEEDEKIRNCIKEYVRTHIRNSSNYGGISRVKIQRKTDLVQVDIHTGFPALLIEGRGKGLLVLKQSVLNSISTERKLKITLSEIDKYYAEANILAEYIALQLESRVAFRRTMKKAIQLAMEQGKVKGIKIQIAGRLNGAEIARIEWAREGRVPLQTLRACIDYCHYPAQTTYGVLGIKVWIFKGEE.

Residues 47 to 117 enclose the KH type-2 domain; it reads VRTHIRNSSN…KLKITLSEID (71 aa).

This sequence belongs to the universal ribosomal protein uS3 family. As to quaternary structure, part of the 30S ribosomal subunit.

The protein localises to the plastid. It localises to the chloroplast. This chain is Small ribosomal subunit protein uS3c (rps3), found in Spirogyra maxima (Green alga).